We begin with the raw amino-acid sequence, 58 residues long: uncharacterized protein (58 aa).

The protein localises to the mitochondrion. This is an uncharacterized protein from Saccharomyces cerevisiae (strain ATCC 204508 / S288c) (Baker's yeast).